The primary structure comprises 283 residues: Polyamine aminopropyltransferase (283 aa).

The region spanning 2 to 238 (ELWYTEEWTE…GHWLFGFASK (237 aa)) is the PABS domain. An S-methyl-5'-thioadenosine-binding site is contributed by Gln-31. The spermidine site is built by His-62 and Asp-86. S-methyl-5'-thioadenosine-binding positions include Glu-106 and 137–138 (DG). Asp-156 functions as the Proton acceptor in the catalytic mechanism. A spermidine-binding site is contributed by 156-159 (DSTD). Pro-163 is an S-methyl-5'-thioadenosine binding site.

It belongs to the spermidine/spermine synthase family. As to quaternary structure, homodimer or homotetramer.

Its subcellular location is the cytoplasm. It carries out the reaction S-adenosyl 3-(methylsulfanyl)propylamine + putrescine = S-methyl-5'-thioadenosine + spermidine + H(+). The protein operates within amine and polyamine biosynthesis; spermidine biosynthesis; spermidine from putrescine: step 1/1. Its function is as follows. Catalyzes the irreversible transfer of a propylamine group from the amino donor S-adenosylmethioninamine (decarboxy-AdoMet) to putrescine (1,4-diaminobutane) to yield spermidine. The polypeptide is Polyamine aminopropyltransferase (Clostridioides difficile (strain 630) (Peptoclostridium difficile)).